Here is a 270-residue protein sequence, read N- to C-terminus: Diaminopimelate epimerase (270 aa).

Asparagine 15, glutamine 49, and asparagine 66 together coordinate substrate. Residue cysteine 75 is the Proton donor of the active site. Substrate-binding positions include 76 to 77 (GN), asparagine 155, asparagine 187, and 204 to 205 (ER). Cysteine 213 (proton acceptor) is an active-site residue. Position 214 to 215 (214 to 215 (GS)) interacts with substrate.

Belongs to the diaminopimelate epimerase family. Homodimer.

The protein localises to the cytoplasm. It catalyses the reaction (2S,6S)-2,6-diaminopimelate = meso-2,6-diaminopimelate. It functions in the pathway amino-acid biosynthesis; L-lysine biosynthesis via DAP pathway; DL-2,6-diaminopimelate from LL-2,6-diaminopimelate: step 1/1. Catalyzes the stereoinversion of LL-2,6-diaminopimelate (L,L-DAP) to meso-diaminopimelate (meso-DAP), a precursor of L-lysine and an essential component of the bacterial peptidoglycan. This is Diaminopimelate epimerase from Rickettsia prowazekii (strain Madrid E).